The sequence spans 329 residues: Ribosomal RNA small subunit methyltransferase H (329 aa).

Residues 39–41 (GGY), Asp56, Phe85, Asp106, and Gln113 contribute to the S-adenosyl-L-methionine site. Positions 289 to 308 (SGAIRPTPEEEARNPRARSA) are disordered.

This sequence belongs to the methyltransferase superfamily. RsmH family.

It localises to the cytoplasm. The catalysed reaction is cytidine(1402) in 16S rRNA + S-adenosyl-L-methionine = N(4)-methylcytidine(1402) in 16S rRNA + S-adenosyl-L-homocysteine + H(+). In terms of biological role, specifically methylates the N4 position of cytidine in position 1402 (C1402) of 16S rRNA. The sequence is that of Ribosomal RNA small subunit methyltransferase H from Novosphingobium aromaticivorans (strain ATCC 700278 / DSM 12444 / CCUG 56034 / CIP 105152 / NBRC 16084 / F199).